The primary structure comprises 663 residues: DNA ligase (663 aa).

NAD(+) is bound by residues 33 to 37, 82 to 83, and glutamate 113; these read DQEFD and SL. Lysine 115 functions as the N6-AMP-lysine intermediate in the catalytic mechanism. NAD(+) contacts are provided by arginine 136, glutamate 170, lysine 286, and lysine 310. Residues cysteine 404, cysteine 407, cysteine 422, and cysteine 427 each coordinate Zn(2+). The BRCT domain maps to 587–663; that stretch reads SSDPSLTGKL…IEESDLEDFL (77 aa).

It belongs to the NAD-dependent DNA ligase family. LigA subfamily. Mg(2+) is required as a cofactor. Mn(2+) serves as cofactor.

The enzyme catalyses NAD(+) + (deoxyribonucleotide)n-3'-hydroxyl + 5'-phospho-(deoxyribonucleotide)m = (deoxyribonucleotide)n+m + AMP + beta-nicotinamide D-nucleotide.. Its function is as follows. DNA ligase that catalyzes the formation of phosphodiester linkages between 5'-phosphoryl and 3'-hydroxyl groups in double-stranded DNA using NAD as a coenzyme and as the energy source for the reaction. It is essential for DNA replication and repair of damaged DNA. This Natranaerobius thermophilus (strain ATCC BAA-1301 / DSM 18059 / JW/NM-WN-LF) protein is DNA ligase.